We begin with the raw amino-acid sequence, 59 residues long: Temporin-HN2 (59 aa).

The signal sequence occupies residues 1–22 (MFTLKKSLLLLLFLGTINLSLS). The stretch at 16-44 (TINLSLSEQERDAKEERRDEMDVEVEKRN) forms a coiled coil. A propeptide spanning residues 23–41 (EQERDAKEERRDEMDVEVE) is cleaved from the precursor. Leucine 57 carries the leucine amide modification.

In terms of tissue distribution, expressed by the skin glands.

It is found in the secreted. In terms of biological role, has antimicrobial activity against some Gram-positive bacteria and fungi but has no activity against a range of Gram-negative bacteria except P.faecalis. Active against the Gram-positive bacteria S.aureus ATCC 25923 (MIC=4.8 uM), S.carnosus KHS (MIC=19 uM), B.licheniformis X39 (MIC=19 uM) and R.rhodochrous X15 (MIC=2.4 uM) but is inactive against E.faecium 091299 and E.faecalis 981. Has a less potent antimicrobial activity against the Gram-negative bacterium P.faecalis X29 (MIC=37.5 uM) and is inactive against E.coli, P.aeruginosa and S.typhi. Has antifungal activity against C.albicans ATCC 2002 (MIC=9.5 uM) and is also active against the slime mold 090223 (MIC=9.5 uM). Has extremely low hemolytic activity against human erythrocytes (LC(50)=300 uM). This Odorrana hainanensis (Odor frog) protein is Temporin-HN2.